A 223-amino-acid chain; its full sequence is uncharacterized protein (223 aa).

It to M.jannaschii MJ1453.

This is an uncharacterized protein from Methanothermobacter thermautotrophicus (strain ATCC 29096 / DSM 1053 / JCM 10044 / NBRC 100330 / Delta H) (Methanobacterium thermoautotrophicum).